The sequence spans 273 residues: DnaJ homolog subfamily C member 27 (273 aa).

The segment at 1–18 (MEANMPKRKEPGRSLRIK) is required for interaction with MAPK1. Residues 23–30 (GNAEVGKS), 71–75 (DMAGH), and 134–137 (NKID) contribute to the GTP site. The J domain maps to 217 to 273 (DSWDMLGVKPGASRDEVNKAYRKLAVLLHPDKCVAPGSEDAFKAVVNARTALLKNIK).

The protein belongs to the small GTPase superfamily. Rab family. As to quaternary structure, interacts directly with MAPK1 (wild-type and kinase-deficient forms). Interacts directly (in GTP-bound form) with MAP2K1 (wild-type and kinase-deficient forms). As to expression, overexpressed in gastrointestinal cancers; expression correlates with later tumor-node-metastasis stages of colorectal cancers.

It is found in the nucleus. GTPase which can activate the MEK/ERK pathway and induce cell transformation when overexpressed. May act as a nuclear scaffold for MAPK1, probably by association with MAPK1 nuclear export signal leading to enhanced ERK1/ERK2 signaling. This chain is DnaJ homolog subfamily C member 27 (DNAJC27), found in Homo sapiens (Human).